Consider the following 321-residue polypeptide: N-acetyl-gamma-glutamyl-phosphate reductase (321 aa).

The active site involves Cys-131.

It belongs to the NAGSA dehydrogenase family. Type 1 subfamily.

It is found in the cytoplasm. The catalysed reaction is N-acetyl-L-glutamate 5-semialdehyde + phosphate + NADP(+) = N-acetyl-L-glutamyl 5-phosphate + NADPH + H(+). Its pathway is amino-acid biosynthesis; L-arginine biosynthesis; N(2)-acetyl-L-ornithine from L-glutamate: step 3/4. In terms of biological role, catalyzes the NADPH-dependent reduction of N-acetyl-5-glutamyl phosphate to yield N-acetyl-L-glutamate 5-semialdehyde. This chain is N-acetyl-gamma-glutamyl-phosphate reductase, found in Christiangramia forsetii (strain DSM 17595 / CGMCC 1.15422 / KT0803) (Gramella forsetii).